Consider the following 243-residue polypeptide: Biosynthetic peptidoglycan transglycosylase (243 aa).

The helical transmembrane segment at 22–42 (LIVLLVLALMSVLQVIVFRFV) threads the bilayer.

It belongs to the glycosyltransferase 51 family.

The protein resides in the cell inner membrane. It carries out the reaction [GlcNAc-(1-&gt;4)-Mur2Ac(oyl-L-Ala-gamma-D-Glu-L-Lys-D-Ala-D-Ala)](n)-di-trans,octa-cis-undecaprenyl diphosphate + beta-D-GlcNAc-(1-&gt;4)-Mur2Ac(oyl-L-Ala-gamma-D-Glu-L-Lys-D-Ala-D-Ala)-di-trans,octa-cis-undecaprenyl diphosphate = [GlcNAc-(1-&gt;4)-Mur2Ac(oyl-L-Ala-gamma-D-Glu-L-Lys-D-Ala-D-Ala)](n+1)-di-trans,octa-cis-undecaprenyl diphosphate + di-trans,octa-cis-undecaprenyl diphosphate + H(+). The protein operates within cell wall biogenesis; peptidoglycan biosynthesis. Peptidoglycan polymerase that catalyzes glycan chain elongation from lipid-linked precursors. In Xylella fastidiosa (strain 9a5c), this protein is Biosynthetic peptidoglycan transglycosylase.